Consider the following 245-residue polypeptide: Orotidine 5'-phosphate decarboxylase (245 aa).

Substrate-binding positions include aspartate 22, lysine 44, 71-80, threonine 131, arginine 192, glutamine 201, glycine 221, and arginine 222; that span reads DLKFHDIPNT. Lysine 73 (proton donor) is an active-site residue.

The protein belongs to the OMP decarboxylase family. Type 1 subfamily. As to quaternary structure, homodimer.

The catalysed reaction is orotidine 5'-phosphate + H(+) = UMP + CO2. The protein operates within pyrimidine metabolism; UMP biosynthesis via de novo pathway; UMP from orotate: step 2/2. Its function is as follows. Catalyzes the decarboxylation of orotidine 5'-monophosphate (OMP) to uridine 5'-monophosphate (UMP). The protein is Orotidine 5'-phosphate decarboxylase of Yersinia pseudotuberculosis serotype O:1b (strain IP 31758).